The primary structure comprises 392 residues: Homeobox protein engrailed-1 (392 aa).

Disordered regions lie at residues 1–100 (MEEQ…AQLH), 132–164 (ARGG…TRAP), 219–251 (KPSD…PAIL), and 282–306 (SDRP…DKRP). Residues 14 to 36 (SALGAAAAATPGGLSLSLSPGAS) are compositionally biased toward low complexity. Composition is skewed to pro residues over residues 51–66 (SPQP…PCLP) and 75–84 (PPHPPPPPPQ). Over residues 85–100 (HLAAPAHQPQPAAQLH) the composition is skewed to low complexity. Gly residues predominate over residues 223 to 236 (TGGGGSGGGAGSPG). Residues 303–362 (DKRPRTAFTAEQLQRLKAEFQANRYITEQRRQTLAQELSLNESQIKIWFQNKRAKIKKAT) constitute a DNA-binding region (homeobox).

Belongs to the engrailed homeobox family.

The protein resides in the nucleus. Its function is as follows. Required for proper formation of the apical ectodermal ridge and correct dorsal-ventral patterning in the limb. The chain is Homeobox protein engrailed-1 (EN1) from Homo sapiens (Human).